Consider the following 79-residue polypeptide: Acyl carrier protein (79 aa).

The Carrier domain maps to 2–77; it reads SDIEARVKKI…NAIDYANTHQ (76 aa). An O-(pantetheine 4'-phosphoryl)serine modification is found at serine 37.

The protein belongs to the acyl carrier protein (ACP) family. Post-translationally, 4'-phosphopantetheine is transferred from CoA to a specific serine of apo-ACP by AcpS. This modification is essential for activity because fatty acids are bound in thioester linkage to the sulfhydryl of the prosthetic group.

Its subcellular location is the cytoplasm. The protein operates within lipid metabolism; fatty acid biosynthesis. Functionally, carrier of the growing fatty acid chain in fatty acid biosynthesis. This is Acyl carrier protein from Paracidovorax citrulli (strain AAC00-1) (Acidovorax citrulli).